The chain runs to 111 residues: Large ribosomal subunit protein uL24 (111 aa).

Belongs to the universal ribosomal protein uL24 family. As to quaternary structure, part of the 50S ribosomal subunit.

One of two assembly initiator proteins, it binds directly to the 5'-end of the 23S rRNA, where it nucleates assembly of the 50S subunit. In terms of biological role, one of the proteins that surrounds the polypeptide exit tunnel on the outside of the subunit. This chain is Large ribosomal subunit protein uL24, found in Chlamydia pneumoniae (Chlamydophila pneumoniae).